Reading from the N-terminus, the 883-residue chain is DNA mismatch repair protein MutS (883 aa).

633–640 serves as a coordination point for ATP; the sequence is GPNMGGKS.

It belongs to the DNA mismatch repair MutS family.

Its function is as follows. This protein is involved in the repair of mismatches in DNA. It is possible that it carries out the mismatch recognition step. This protein has a weak ATPase activity. The protein is DNA mismatch repair protein MutS of Bordetella parapertussis (strain 12822 / ATCC BAA-587 / NCTC 13253).